Here is an 87-residue protein sequence, read N- to C-terminus: Small ribosomal subunit protein bS20 (87 aa).

Basic residues predominate over residues 1-15; that stretch reads MANHKSAMKRIKQTA. Residues 1–27 form a disordered region; that stretch reads MANHKSAMKRIKQTAKRTERNKHERST. The span at 16–27 shows a compositional bias: basic and acidic residues; sequence KRTERNKHERST.

This sequence belongs to the bacterial ribosomal protein bS20 family.

Its function is as follows. Binds directly to 16S ribosomal RNA. In Citrifermentans bemidjiense (strain ATCC BAA-1014 / DSM 16622 / JCM 12645 / Bem) (Geobacter bemidjiensis), this protein is Small ribosomal subunit protein bS20.